The primary structure comprises 376 residues: Histidinol dehydrogenase (376 aa).

Residues Y100 and N182 each contribute to the NAD(+) site. The substrate site is built by S205, Q227, and H230. The Zn(2+) site is built by Q227 and H230. Catalysis depends on proton acceptor residues E275 and H276. The substrate site is built by H276, D309, E363, and H368. D309 is a Zn(2+) binding site. Residue H368 participates in Zn(2+) binding.

It belongs to the histidinol dehydrogenase family. Zn(2+) serves as cofactor.

The enzyme catalyses L-histidinol + 2 NAD(+) + H2O = L-histidine + 2 NADH + 3 H(+). It participates in amino-acid biosynthesis; L-histidine biosynthesis; L-histidine from 5-phospho-alpha-D-ribose 1-diphosphate: step 9/9. Functionally, catalyzes the sequential NAD-dependent oxidations of L-histidinol to L-histidinaldehyde and then to L-histidine. The chain is Histidinol dehydrogenase from Thermococcus kodakarensis (strain ATCC BAA-918 / JCM 12380 / KOD1) (Pyrococcus kodakaraensis (strain KOD1)).